Here is a 214-residue protein sequence, read N- to C-terminus: Potassium-transporting ATPase KdpC subunit (214 aa).

A helical membrane pass occupies residues 17-37; it reads LWVITALIYPFSMIAIGQILF.

Belongs to the KdpC family. The system is composed of three essential subunits: KdpA, KdpB and KdpC.

It localises to the cell inner membrane. Functionally, part of the high-affinity ATP-driven potassium transport (or Kdp) system, which catalyzes the hydrolysis of ATP coupled with the electrogenic transport of potassium into the cytoplasm. This subunit acts as a catalytic chaperone that increases the ATP-binding affinity of the ATP-hydrolyzing subunit KdpB by the formation of a transient KdpB/KdpC/ATP ternary complex. The polypeptide is Potassium-transporting ATPase KdpC subunit (Microcystis aeruginosa (strain NIES-843 / IAM M-2473)).